Consider the following 289-residue polypeptide: 33 kDa chaperonin (289 aa).

Intrachain disulfides connect Cys-237/Cys-239 and Cys-270/Cys-273.

It belongs to the HSP33 family. In terms of processing, under oxidizing conditions two disulfide bonds are formed involving the reactive cysteines. Under reducing conditions zinc is bound to the reactive cysteines and the protein is inactive.

Its subcellular location is the cytoplasm. Redox regulated molecular chaperone. Protects both thermally unfolding and oxidatively damaged proteins from irreversible aggregation. Plays an important role in the bacterial defense system toward oxidative stress. This chain is 33 kDa chaperonin, found in Oceanobacillus iheyensis (strain DSM 14371 / CIP 107618 / JCM 11309 / KCTC 3954 / HTE831).